A 476-amino-acid polypeptide reads, in one-letter code: MTSTEEKTTSGRVVRITGPVVDVEFPRGSVPELFNALHADITYKELSKTLTLEVAQHLGDNLVRTISMQPTDGLVRGVEVTDTGNSISVPVGDGVKGHVFNALGDCLDEPGYGKDFEHWSIHRKPPPFSELEPRTEMLETGLKVVDLLTPYVRGGKIALFGGAGVGKTVLIQEMINRIARNFGGTSVFAGVGERTREGNDLWVELEDANVLKDTALVFGQMDEPPGTRMRVALSALTMAEFFRDEQQQDVLLFIDNIFRFTQAGSEVSTLLGRMPSAVGYQPTLADEMGELQERITSTRGRSITSMQAVYVPADDYTDPAPATTFAHLDATTELSRTVFSKGIFPAVDPLASSSTILDPAVVGDEHYRVAQEVIRILQRYKDLQDIIAILGIDELAEEDKQLVQRARRLERFLSQNMMAAEQFTGQPGSTVPLKETIEAFDKLTKGEFDHLPEQAFFLIGGLDDLAKKAESLGAKL.

161–168 (GGAGVGKT) lines the ATP pocket.

It belongs to the ATPase alpha/beta chains family. F-type ATPases have 2 components, CF(1) - the catalytic core - and CF(0) - the membrane proton channel. CF(1) has five subunits: alpha(3), beta(3), gamma(1), delta(1), epsilon(1). CF(0) has three main subunits: a(1), b(2) and c(9-12). The alpha and beta chains form an alternating ring which encloses part of the gamma chain. CF(1) is attached to CF(0) by a central stalk formed by the gamma and epsilon chains, while a peripheral stalk is formed by the delta and b chains.

The protein resides in the cell membrane. The enzyme catalyses ATP + H2O + 4 H(+)(in) = ADP + phosphate + 5 H(+)(out). Its function is as follows. Produces ATP from ADP in the presence of a proton gradient across the membrane. The catalytic sites are hosted primarily by the beta subunits. The protein is ATP synthase subunit beta of Mycolicibacterium gilvum (strain PYR-GCK) (Mycobacterium gilvum (strain PYR-GCK)).